We begin with the raw amino-acid sequence, 380 residues long: UDP-N-acetylglucosamine--N-acetylmuramyl-(pentapeptide) pyrophosphoryl-undecaprenol N-acetylglucosamine transferase (380 aa).

Residues 23 to 25 (TGG), asparagine 137, arginine 178, serine 210, isoleucine 266, and glutamine 311 each bind UDP-N-acetyl-alpha-D-glucosamine.

It belongs to the glycosyltransferase 28 family. MurG subfamily.

It localises to the cell inner membrane. The catalysed reaction is di-trans,octa-cis-undecaprenyl diphospho-N-acetyl-alpha-D-muramoyl-L-alanyl-D-glutamyl-meso-2,6-diaminopimeloyl-D-alanyl-D-alanine + UDP-N-acetyl-alpha-D-glucosamine = di-trans,octa-cis-undecaprenyl diphospho-[N-acetyl-alpha-D-glucosaminyl-(1-&gt;4)]-N-acetyl-alpha-D-muramoyl-L-alanyl-D-glutamyl-meso-2,6-diaminopimeloyl-D-alanyl-D-alanine + UDP + H(+). It participates in cell wall biogenesis; peptidoglycan biosynthesis. Cell wall formation. Catalyzes the transfer of a GlcNAc subunit on undecaprenyl-pyrophosphoryl-MurNAc-pentapeptide (lipid intermediate I) to form undecaprenyl-pyrophosphoryl-MurNAc-(pentapeptide)GlcNAc (lipid intermediate II). The protein is UDP-N-acetylglucosamine--N-acetylmuramyl-(pentapeptide) pyrophosphoryl-undecaprenol N-acetylglucosamine transferase of Bacteroides fragilis (strain ATCC 25285 / DSM 2151 / CCUG 4856 / JCM 11019 / LMG 10263 / NCTC 9343 / Onslow / VPI 2553 / EN-2).